Consider the following 254-residue polypeptide: 5'-nucleotidase SurE (254 aa).

A divalent metal cation contacts are provided by Asp-8, Asp-9, Ser-40, and Asn-93.

It belongs to the SurE nucleotidase family. A divalent metal cation is required as a cofactor.

The protein localises to the cytoplasm. The enzyme catalyses a ribonucleoside 5'-phosphate + H2O = a ribonucleoside + phosphate. Functionally, nucleotidase that shows phosphatase activity on nucleoside 5'-monophosphates. The chain is 5'-nucleotidase SurE from Methylorubrum extorquens (strain CM4 / NCIMB 13688) (Methylobacterium extorquens).